The following is a 132-amino-acid chain: uncharacterized protein (132 aa).

3 consecutive transmembrane segments (helical) span residues 19–39, 58–78, and 93–113; these read FTWIFGAWDIPLITLLVFIFL, IGLRGITKKGLILVVLLVAVM, and LIAYFYIMNEGISILENCAAL.

It belongs to the bacteriophage holin family. Cp-1 holin subfamily.

The protein localises to the cell membrane. This is an uncharacterized protein from Clostridium perfringens.